A 356-amino-acid chain; its full sequence is Protein-glutamate methylesterase/protein-glutamine glutaminase (356 aa).

In terms of domain architecture, Response regulatory spans 4–121 (KVLIVDDSAL…QSGMLEYTDL (118 aa)). D55 carries the 4-aspartylphosphate modification. Residues 156 to 349 (PLTSSEKLII…RRVLEFFAAH (194 aa)) form the CheB-type methylesterase domain. Active-site residues include S169, H195, and D291.

Belongs to the CheB family. In terms of processing, phosphorylated by CheA. Phosphorylation of the N-terminal regulatory domain activates the methylesterase activity.

Its subcellular location is the cytoplasm. It catalyses the reaction [protein]-L-glutamate 5-O-methyl ester + H2O = L-glutamyl-[protein] + methanol + H(+). The catalysed reaction is L-glutaminyl-[protein] + H2O = L-glutamyl-[protein] + NH4(+). Functionally, involved in chemotaxis. Part of a chemotaxis signal transduction system that modulates chemotaxis in response to various stimuli. Catalyzes the demethylation of specific methylglutamate residues introduced into the chemoreceptors (methyl-accepting chemotaxis proteins or MCP) by CheR. Also mediates the irreversible deamidation of specific glutamine residues to glutamic acid. The protein is Protein-glutamate methylesterase/protein-glutamine glutaminase of Thiobacillus denitrificans (strain ATCC 25259 / T1).